A 427-amino-acid polypeptide reads, in one-letter code: Lactadherin (427 aa).

A signal peptide spans 1 to 18 (MPCPRLLAALFCSSGLFA). 2 consecutive EGF-like domains span residues 20–59 (SGDFCDSSLCLHGGTCLLNEDRTPPFYCLCPEGFTGLLCN) and 62–106 (EHGP…IHCE). 3 disulfides stabilise this stretch: Cys-24-Cys-35, Cys-29-Cys-47, and Cys-49-Cys-58. Ser-27 carries O-linked (Fuc...) serine; in PAS-6 glycosylation. Residue Thr-34 is glycosylated (O-linked (Fuc...) threonine; in PAS-7). Asn-59 carries an N-linked (GlcNAc...) (hybrid) asparagine; in PAS-6 and PAS-7 glycan. 6 disulfide bridges follow: Cys-66–Cys-77, Cys-71–Cys-94, Cys-96–Cys-105, Cys-109–Cys-265, Cys-252–Cys-256, and Cys-270–Cys-427. Residues 85–87 (RGD) carry the Cell attachment site motif. 2 consecutive F5/8 type C domains span residues 109–265 (CTSP…LLGC) and 270–427 (CTEP…LLGC). Asn-227 carries N-linked (GlcNAc...) (high mannose) asparagine; in PAS-6 glycosylation.

Post-translationally, the two O-linked glycans consist of Gal, GlcNAc and Fuc, with probably Fuc as reducing terminal sugar. Milk and spermatozoan. Also present in epididymis, kidney, heart, lymphatic gland and spleen but not esophagus, small intestine, muscle and liver.

It is found in the membrane. Its subcellular location is the secreted. It localises to the cytoplasmic vesicle. The protein localises to the secretory vesicle. The protein resides in the acrosome membrane. Functionally, contributes to phagocytic removal of apoptotic cells in many tissues. Plays an important role in the maintenance of intestinal epithelial homeostasis and the promotion of mucosal healing. Promotes VEGF-dependent neovascularization. Specific ligand for the alpha-v/beta-3 and alpha-v/beta-5 receptors. Also binds to phosphatidylserine-enriched cell surfaces in a receptor-independent manner. Zona pellucida-binding protein which may play a role in gamete interaction. The sequence is that of Lactadherin (MFGE8) from Bos taurus (Bovine).